Reading from the N-terminus, the 240-residue chain is Probable xyloglucan-specific endo-beta-1,4-glucanase A (240 aa).

An N-terminal signal peptide occupies residues 1 to 15 (MKFLTPLVLSSLASA).

Belongs to the glycosyl hydrolase 12 (cellulase H) family.

Its subcellular location is the secreted. The enzyme catalyses xyloglucan + H2O = xyloglucan oligosaccharides.. Functionally, catalyzes endohydrolysis of 1,4-beta-D-glucosidic linkages in xyloglucan with retention of the beta-configuration of the glycosyl residues. Specific for xyloglucan and does not hydrolyze other cell wall components. The sequence is that of Probable xyloglucan-specific endo-beta-1,4-glucanase A (xgeA) from Aspergillus oryzae (strain ATCC 42149 / RIB 40) (Yellow koji mold).